The following is a 391-amino-acid chain: Multidrug resistance protein MdtL (391 aa).

Transmembrane regions (helical) follow at residues 4 to 24 (FLIC…MYLV), 42 to 62 (IAFS…GKVA), 69 to 89 (PVAI…SLAE), 93 to 113 (LFLA…VVAF), 131 to 151 (LLNG…HLIM), 158 to 178 (SLFW…LFIL), 203 to 222 (FFLS…LTFV), 245 to 265 (ALTA…LGIF), 269 to 289 (TLMI…AVSP), 293 to 313 (ISLF…GVAM), 324 to 346 (AGVA…IWLA), and 363 to 383 (ACSI…PVAA).

Belongs to the major facilitator superfamily. DHA1 family. MdtL (TC 2.A.1.2.22) subfamily.

The protein resides in the cell inner membrane. In terms of biological role, confers resistance to chloramphenicol. This chain is Multidrug resistance protein MdtL, found in Escherichia fergusonii (strain ATCC 35469 / DSM 13698 / CCUG 18766 / IAM 14443 / JCM 21226 / LMG 7866 / NBRC 102419 / NCTC 12128 / CDC 0568-73).